The primary structure comprises 255 residues: Phosphate import ATP-binding protein PstB (255 aa).

One can recognise an ABC transporter domain in the interval 9-250; that stretch reads MYAQGLQFYY…PRNKQTEDYI (242 aa). 41 to 48 lines the ATP pocket; the sequence is GPSGCGKS.

It belongs to the ABC transporter superfamily. Phosphate importer (TC 3.A.1.7) family. The complex is composed of two ATP-binding proteins (PstB), two transmembrane proteins (PstC and PstA) and a solute-binding protein (PstS).

It localises to the cell inner membrane. The catalysed reaction is phosphate(out) + ATP + H2O = ADP + 2 phosphate(in) + H(+). Part of the ABC transporter complex PstSACB involved in phosphate import. Responsible for energy coupling to the transport system. This is Phosphate import ATP-binding protein PstB from Nitratidesulfovibrio vulgaris (strain ATCC 29579 / DSM 644 / CCUG 34227 / NCIMB 8303 / VKM B-1760 / Hildenborough) (Desulfovibrio vulgaris).